Here is a 301-residue protein sequence, read N- to C-terminus: Probable alpha-L-glutamate ligase (301 aa).

Residues 104–287 (LQLLSRKGVG…IAGMIIEYIE (184 aa)) form the ATP-grasp domain. Residues K141, 178 to 179 (EY), D187, and 211 to 213 (RSN) each bind ATP. Positions 248, 260, and 262 each coordinate Mg(2+). Mn(2+) contacts are provided by D248, E260, and N262.

The protein belongs to the RimK family. It depends on Mg(2+) as a cofactor. Mn(2+) serves as cofactor.

The chain is Probable alpha-L-glutamate ligase from Photobacterium profundum (strain SS9).